A 445-amino-acid chain; its full sequence is 3-phosphoshikimate 1-carboxyvinyltransferase (445 aa).

Positions 28, 29, and 33 each coordinate 3-phosphoshikimate. Lys-28 serves as a coordination point for phosphoenolpyruvate. 2 residues coordinate phosphoenolpyruvate: Gly-101 and Arg-129. The 3-phosphoshikimate site is built by Ser-175, Gln-177, Asp-328, and Lys-355. Residue Gln-177 coordinates phosphoenolpyruvate. Asp-328 acts as the Proton acceptor in catalysis. 2 residues coordinate phosphoenolpyruvate: Arg-359 and Arg-402.

It belongs to the EPSP synthase family. In terms of assembly, monomer.

It localises to the cytoplasm. The catalysed reaction is 3-phosphoshikimate + phosphoenolpyruvate = 5-O-(1-carboxyvinyl)-3-phosphoshikimate + phosphate. It participates in metabolic intermediate biosynthesis; chorismate biosynthesis; chorismate from D-erythrose 4-phosphate and phosphoenolpyruvate: step 6/7. In terms of biological role, catalyzes the transfer of the enolpyruvyl moiety of phosphoenolpyruvate (PEP) to the 5-hydroxyl of shikimate-3-phosphate (S3P) to produce enolpyruvyl shikimate-3-phosphate and inorganic phosphate. In Rhodopseudomonas palustris (strain BisA53), this protein is 3-phosphoshikimate 1-carboxyvinyltransferase.